Reading from the N-terminus, the 142-residue chain is Protein lin-32 (142 aa).

Residues 30-48 show a composition bias toward polar residues; that stretch reads PLQSPNFSLDSPNYPDSLS. The tract at residues 30–66 is disordered; the sequence is PLQSPNFSLDSPNYPDSLSNGGGKDDKKKCRRYKTPS. Residues 72–124 form the bHLH domain; sequence MRRSAANERERRRMNTLNVAYDELREVLPEIDSGKKLSKFETLQMAQKYIECL.

As to quaternary structure, forms a heterodimer with hlh-2. In terms of tissue distribution, expressed in PVD motor neurons.

Its subcellular location is the nucleus. Functionally, probable transcription factor which binds the E box motif 5'-CA[TC][AG]TG-3'. Essential for the specification of the neuroblast cell fate in the development of peripheral sense organs. Its role in the generation of sensory neurons may be through positively regulating the expression of the zinc finger protein ztf-11 during postdeirid neurogenesis. Required for specification of cell fate, acting in concert with lin-32, in the development of the male-specific genital sensilla (simple sense organs) known as rays. Involved in regulating glial specification, perhaps by suppressing a glial fate in different lineages during early embryogenesis. The chain is Protein lin-32 from Caenorhabditis elegans.